Here is a 648-residue protein sequence, read N- to C-terminus: MTNFEPKKLKNVWTIEDSISTYNIDKWGDKYFSINSKGNISVTKDIKSENKIDLFKLVKELKSREINPPLIIRFNDILKDRINALHDSFFKAIKTYKYKNIYQGVFPVKCNQQKNVLEKIIDFGSQWNFGLEVGSKSELLIGLALLENHNSLLICNGYKDKKYIEIATLARKLGKNPIIVIEQRDEVKRIIQAVQELNATPLIGIRAKLSSKSSGRWGKSIGDNSKFGLSIPEIMLTIKELKEANLINEMKLLHFHIGSQISDIAVIKDALQEASQIYVELCKLGAPMQYIDVGGGLGIDFDGTKTSSNTSTNYSLQNYANDVIATIKDSCELNNIKHPTIISESGRAIISHCSVLIFNVLGTSHVSSKLQIFDKKNQQLIISNLLETYYELKKLKNKKINLSQIIELWNDAKKFKEDCLVAFRLGFLSLAERAYAEELAWACAKEISNNLNNDEINHPDLSEITETLASTYYANLSIFKSIPDSWAINQIFPIVPIHRHLEEPFCKGNFADLTCDSDGKLNNFIDDGKIKSLLNLHEPEKDKDYLIGIFMTGAYQEALGNLHNLFGSTNVVHIDINQDDSYKVKNIIKEDSKSEILQLLDYSSASLVESIRINTESAIDQKKLTIEEARKLMDQIEISLRKSSYLSE.

Lys109 bears the N6-(pyridoxal phosphate)lysine mark. Residue 291–301 (IDVGGGLGIDF) participates in substrate binding.

It belongs to the Orn/Lys/Arg decarboxylase class-II family. SpeA subfamily. The cofactor is Mg(2+). Requires pyridoxal 5'-phosphate as cofactor.

It carries out the reaction L-arginine + H(+) = agmatine + CO2. It functions in the pathway amine and polyamine biosynthesis; agmatine biosynthesis; agmatine from L-arginine: step 1/1. Functionally, catalyzes the biosynthesis of agmatine from arginine. The sequence is that of Biosynthetic arginine decarboxylase from Prochlorococcus marinus (strain MIT 9301).